The sequence spans 503 residues: MSAALRFDNIGKVFPGVRALDGISFDVHAGEVHGLMGENGAGKSTLLKILGGEYQPDAGSVLVDGQPVHFSSAAASIAAGIAVIHQELQYVPDLTVAENLLLGRLPNALGWVKKGEAKRHVRERLTAMGVDLDPDAKLGRLSIAQRQMVEICKALMRNARVIALDEPTSSLSHRETEVLFKLVDDLRAQGRALIYISHRMDEIYRLCDACTIFRDGRKIASHESLADVPREQLVAEMVGREISDIYHYAPRALGDVRFSAEGVDGPALREPASFSVRAGEIVGFFGLVGAGRSELMRLVYGADRRRAGELTLDGKRIDVKRTGDAIRHGIVLCPEDRKEEGIIAMASVAENINISCRRHSLRAGLFIDRKTEIETADRFIQRLKIKTPNRRQKIRFLSGGNQQKAILSRWLAEPDLKVVILDEPTRGIDVGAKHEIYDVIYRLAERGCAIVMVSSELPEVLGVSDRIVVMREGRIAGELARAQANEHAVLSLALPQTSVAEAA.

ABC transporter domains follow at residues 5–240 (LRFD…MVGR) and 251–497 (RALG…LPQT). An ATP-binding site is contributed by 37 to 44 (GENGAGKS).

The protein belongs to the ABC transporter superfamily. Arabinose importer (TC 3.A.1.2.2) family. In terms of assembly, the complex is composed of two ATP-binding proteins (AraG), two transmembrane proteins (AraH) and a solute-binding protein (AraF).

It localises to the cell inner membrane. It carries out the reaction L-arabinose(out) + ATP + H2O = L-arabinose(in) + ADP + phosphate + H(+). Functionally, part of the ABC transporter complex AraFGH involved in arabinose import. Responsible for energy coupling to the transport system. In Burkholderia ambifaria (strain ATCC BAA-244 / DSM 16087 / CCUG 44356 / LMG 19182 / AMMD) (Burkholderia cepacia (strain AMMD)), this protein is Arabinose import ATP-binding protein AraG 1.